The following is a 231-amino-acid chain: Large ribosomal subunit protein uL1 (231 aa).

This sequence belongs to the universal ribosomal protein uL1 family. Part of the 50S ribosomal subunit.

In terms of biological role, binds directly to 23S rRNA. The L1 stalk is quite mobile in the ribosome, and is involved in E site tRNA release. Its function is as follows. Protein L1 is also a translational repressor protein, it controls the translation of the L11 operon by binding to its mRNA. This chain is Large ribosomal subunit protein uL1, found in Buchnera aphidicola subsp. Acyrthosiphon pisum (strain 5A).